A 291-amino-acid chain; its full sequence is ATP synthase gamma chain (291 aa).

The protein belongs to the ATPase gamma chain family. F-type ATPases have 2 components, CF(1) - the catalytic core - and CF(0) - the membrane proton channel. CF(1) has five subunits: alpha(3), beta(3), gamma(1), delta(1), epsilon(1). CF(0) has three main subunits: a, b and c.

It is found in the cell membrane. In terms of biological role, produces ATP from ADP in the presence of a proton gradient across the membrane. The gamma chain is believed to be important in regulating ATPase activity and the flow of protons through the CF(0) complex. The protein is ATP synthase gamma chain of Buchnera aphidicola subsp. Baizongia pistaciae (strain Bp).